Consider the following 853-residue polypeptide: MICAL-like protein 1 (853 aa).

A Calponin-homology (CH) domain is found at 2–108 (AGPRGALLAW…YVSQYYNHFA (107 aa)). Disordered stretches follow at residues 118–162 (PRKG…TPSS) and 224–659 (SGRS…FPLI). The segment covering 145–162 (ECSSGSLSKQGSHRTPSS) has biased composition (polar residues). The LIM zinc-binding domain occupies 162–224 (STCAACQQHV…AEHCARLGPS (63 aa)). 2 positions are modified to phosphoserine: Ser292 and Ser306. Thr312 and Thr315 each carry phosphothreonine. The segment covering 355 to 366 (LSERTPAPRKDP) has biased composition (basic and acidic residues). Pro residues predominate over residues 381–394 (APLPPSSSPGPPPG). A Phosphoserine modification is found at Ser388. Positions 419–421 (NPF) match the NPF1 motif. Positions 429–445 (PAAPSPAPGPAPTPPES) are enriched in pro residues. Phosphothreonine is present on residues Thr457 and Thr459. Phosphoserine occurs at positions 460, 461, 474, and 476. Low complexity-rich tracts occupy residues 495–515 (PSPALSVESLSSESSSQAPSE) and 541–553 (SASLSANSSLSSS). A phosphoserine mark is found at Ser568 and Ser611. Residues 607 to 618 (PGTSSPQLQVKS) are compositionally biased toward polar residues. Residues 623-625 (NPF) carry the NPF2 motif. A mediates the interaction with RAB13 and RAB35 and intramolecular interaction with the CH domain region spans residues 642–853 (KGSKPARPPA…TKSKCPGDRS (212 aa)). A bMERB domain is found at 661–808 (RKVQSDQYIP…EEEEDKMLEA (148 aa)). A coiled-coil region spans residues 671-701 (EEDIHGEIDTIERQLDALEHRGVLLEEKLRG). A necessary and sufficient to associate with tubular recycling endosome membranes, mediate phosphatidic acid-binding and membrane tubulation region spans residues 690 to 853 (HRGVLLEEKL…TKSKCPGDRS (164 aa)). Ser730 is subject to Phosphoserine. The stretch at 791–820 (CLDEDRQREEEEDKMLEAMIKKKEFQKETE) forms a coiled coil.

In terms of assembly, homooligomer. Interacts (via NPF1 motif) with EHD1 (via EH domain); the interaction is direct and probably recruits EHD1 to membranes. Interacts with EHD3 (via EH domain). Interacts with RAB35 (GTP-bound form); the interaction is direct and probably recruits MICALL1 to membranes. Interacts with ACAP2; the interaction is indirect through RAB35. Interacts with RAB8A (GTP-bound form); regulates RAB8A association with recycling endosomes. Interacts with RAB13 (GTP-bound form). Interacts with ARF6 (GTP-bound form). Interacts with PACSIN2 (via the SH3 domain). Interacts with DPYSL2.

It is found in the recycling endosome membrane. The protein resides in the late endosome membrane. Its subcellular location is the cell projection. The protein localises to the cilium membrane. It localises to the cytoplasm. It is found in the cytoskeleton. The protein resides in the microtubule organizing center. Its subcellular location is the centrosome. The protein localises to the centriole. Its function is as follows. Lipid-binding protein with higher affinity for phosphatidic acid, a lipid enriched in recycling endosome membranes. On endosome membranes, acts as a downstream effector of Rab proteins recruiting cytosolic proteins to regulate membrane tubulation. Involved in a late step of receptor-mediated endocytosis regulating for instance endocytosed-EGF receptor trafficking. Alternatively, regulates slow endocytic recycling of endocytosed proteins back to the plasma membrane. Also involved in cargo protein delivery to the plasma membrane. Plays a role in ciliogenesis coordination, recruits EHD1 to primary cilium where it is anchored to the centriole through interaction with tubulins. May indirectly play a role in neurite outgrowth. The protein is MICAL-like protein 1 (MICALL1) of Bos taurus (Bovine).